The sequence spans 611 residues: Glutamine--fructose-6-phosphate aminotransferase [isomerizing] (611 aa).

Cys2 (nucleophile; for GATase activity) is an active-site residue. The Glutamine amidotransferase type-2 domain maps to 2 to 219; it reads CGIVGAVAER…EGDIAEIRRD (218 aa). SIS domains follow at residues 287–427 and 460–601; these read AAEL…VKGS and VAEL…VDQP. Residue Lys606 is the For Fru-6P isomerization activity of the active site.

In terms of assembly, homodimer.

It localises to the cytoplasm. It catalyses the reaction D-fructose 6-phosphate + L-glutamine = D-glucosamine 6-phosphate + L-glutamate. Its function is as follows. Catalyzes the first step in hexosamine metabolism, converting fructose-6P into glucosamine-6P using glutamine as a nitrogen source. The polypeptide is Glutamine--fructose-6-phosphate aminotransferase [isomerizing] (Pseudomonas syringae pv. tomato (strain ATCC BAA-871 / DC3000)).